The primary structure comprises 146 residues: 3-hydroxyacyl-[acyl-carrier-protein] dehydratase FabZ (146 aa).

The active site involves H49.

It belongs to the thioester dehydratase family. FabZ subfamily.

It localises to the cytoplasm. It catalyses the reaction a (3R)-hydroxyacyl-[ACP] = a (2E)-enoyl-[ACP] + H2O. Involved in unsaturated fatty acids biosynthesis. Catalyzes the dehydration of short chain beta-hydroxyacyl-ACPs and long chain saturated and unsaturated beta-hydroxyacyl-ACPs. The polypeptide is 3-hydroxyacyl-[acyl-carrier-protein] dehydratase FabZ (Pseudomonas syringae pv. tomato (strain ATCC BAA-871 / DC3000)).